Here is a 101-residue protein sequence, read N- to C-terminus: Small ribosomal subunit protein uS10 (101 aa).

This sequence belongs to the universal ribosomal protein uS10 family. As to quaternary structure, part of the 30S ribosomal subunit.

In terms of biological role, involved in the binding of tRNA to the ribosomes. This is Small ribosomal subunit protein uS10 from Cytophaga hutchinsonii (strain ATCC 33406 / DSM 1761 / CIP 103989 / NBRC 15051 / NCIMB 9469 / D465).